Reading from the N-terminus, the 170-residue chain is MASEAERTFHRFAVFGESSSSSKEITNKNFSKLCKDCDIMDGKAVTSTDVDIVFSKVKAKNARTINFQQFQEAMKELGQKRFKGKNPDEALQGVFKLMEGKDPATTGVTKSTTVGGVDRLTDTSKYTGTHKERFDESGKGKGIEGREETTDNSGYVSGYKGAGTYDKKNQ.

Positions 105–117 are enriched in low complexity; that stretch reads TTGVTKSTTVGGV. Positions 105-170 are disordered; it reads TTGVTKSTTV…GAGTYDKKNQ (66 aa). Residues 129–149 show a composition bias toward basic and acidic residues; sequence THKERFDESGKGKGIEGREET.

The protein belongs to the TPPP family. As to expression, only expressed in male reproductive organs, including testis. Expressed in elongating spermatids at stages IV-VIII of the seminiferous epithelial cycle in testis and in mature sperm in the epididymis.

The protein localises to the cytoplasm. Its subcellular location is the cytosol. It is found in the cell projection. It localises to the cilium. The protein resides in the flagellum. Probable regulator of microtubule dynamics required for sperm motility. In contrast to other members of the family, has no microtubule bundling activity. The polypeptide is Tubulin polymerization-promoting protein family member 2 (Mus musculus (Mouse)).